Reading from the N-terminus, the 160-residue chain is SsrA-binding protein (160 aa).

The protein belongs to the SmpB family.

It localises to the cytoplasm. In terms of biological role, required for rescue of stalled ribosomes mediated by trans-translation. Binds to transfer-messenger RNA (tmRNA), required for stable association of tmRNA with ribosomes. tmRNA and SmpB together mimic tRNA shape, replacing the anticodon stem-loop with SmpB. tmRNA is encoded by the ssrA gene; the 2 termini fold to resemble tRNA(Ala) and it encodes a 'tag peptide', a short internal open reading frame. During trans-translation Ala-aminoacylated tmRNA acts like a tRNA, entering the A-site of stalled ribosomes, displacing the stalled mRNA. The ribosome then switches to translate the ORF on the tmRNA; the nascent peptide is terminated with the 'tag peptide' encoded by the tmRNA and targeted for degradation. The ribosome is freed to recommence translation, which seems to be the essential function of trans-translation. This Chloroflexus aurantiacus (strain ATCC 29364 / DSM 637 / Y-400-fl) protein is SsrA-binding protein.